A 445-amino-acid chain; its full sequence is Gasdermin-A (445 aa).

The interval 1–251 is triggers pyroptosis; that stretch reads MTMFENVTRA…VILIQASDVG (251 aa). 9–13 serves as a coordination point for a cardiolipin; that stretch reads RALAR. A run of 4 beta stranded transmembrane segments spans residues 78–95, 99–120, 163–179, and 183–197; these read NFGF…DVDV, VKVK…TLSV, VTLE…SLPF, and LGLQ…AVTI.

This sequence belongs to the gasdermin family. In terms of assembly, homooligomer; homooligomeric ring-shaped pore complex containing 18-36 subunits when inserted in the membrane. In terms of processing, cleavage by S.pyogenes SpeB relieves autoinhibition by releasing the N-terminal moiety (Gasdermin-A, N-terminal) that initiates pyroptosis. Palmitoylated. As to expression, expressed predominantly in the gastrointestinal tract and, at a lower level, in the skin. Also detected in mammary gland. In the gastrointestinal tract, mainly expressed in differentiated cells, including the differentiated cell layer of esophagus and mucus-secreting pit cells of the gastric epithelium. Down-regulated in gastric cancer cells.

The protein resides in the cytoplasm. The protein localises to the perinuclear region. Its subcellular location is the cytosol. It is found in the cell membrane. With respect to regulation, the full-length protein before cleavage is inactive: intramolecular interactions between N- and C-terminal domains mediate autoinhibition in the absence of activation signal. The intrinsic pyroptosis-inducing activity is carried by the released N-terminal moiety (Gasdermin-A, N-terminal) following cleavage by S.pyogenes effector protein SpeB. This form constitutes the precursor of the pore-forming protein and acts as a sensor of infection: upon infection by S.pyogenes, specifically cleaved by S.pyogenes effector protein SpeB in epithelial cells, releasing the N-terminal moiety (Gasdermin-A, N-terminal) that binds to membranes and forms pores, triggering pyroptosis. Functionally, pore-forming protein that causes membrane permeabilization and pyroptosis. Released upon cleavage by S.pyogenes effector protein SpeB, and binds to membrane inner leaflet lipids. Homooligomerizes within the membrane and forms pores of 10-15 nanometers (nm) of inner diameter, triggering pyroptosis. Pyroptosis triggers the elimination of the infected skin cell, depriving the pathogen of its protective niche, while inducing an inflammatory response. This ultimately prevents bacterial penetration of the epithelial barrier and a subsequent systemic dissemination of the pathogen. Binds to cardiolipin and other acidic phospholipids, such as phosphatidylserine, which mediate its targeting to the inner leaflet membrane. In Homo sapiens (Human), this protein is Gasdermin-A.